Here is a 201-residue protein sequence, read N- to C-terminus: Dephospho-CoA kinase (201 aa).

A DPCK domain is found at 3-201; the sequence is ILGLTGGIGS…QIDSRVGCKI (199 aa). Residue 11–16 participates in ATP binding; that stretch reads GSGKSL.

It belongs to the CoaE family.

The protein resides in the cytoplasm. The catalysed reaction is 3'-dephospho-CoA + ATP = ADP + CoA + H(+). Its pathway is cofactor biosynthesis; coenzyme A biosynthesis; CoA from (R)-pantothenate: step 5/5. Its function is as follows. Catalyzes the phosphorylation of the 3'-hydroxyl group of dephosphocoenzyme A to form coenzyme A. The chain is Dephospho-CoA kinase from Ehrlichia ruminantium (strain Welgevonden).